A 435-amino-acid chain; its full sequence is 5-methylthioadenosine/S-adenosylhomocysteine deaminase (435 aa).

Zn(2+)-binding residues include His-65 and His-67. Substrate is bound by residues Glu-94, Arg-150, and His-189. A Zn(2+)-binding site is contributed by His-216. Positions 219 and 304 each coordinate substrate. Position 304 (Asp-304) interacts with Zn(2+).

The protein belongs to the metallo-dependent hydrolases superfamily. MTA/SAH deaminase family. Zn(2+) serves as cofactor.

It carries out the reaction S-adenosyl-L-homocysteine + H2O + H(+) = S-inosyl-L-homocysteine + NH4(+). The enzyme catalyses S-methyl-5'-thioadenosine + H2O + H(+) = S-methyl-5'-thioinosine + NH4(+). Catalyzes the deamination of 5-methylthioadenosine and S-adenosyl-L-homocysteine into 5-methylthioinosine and S-inosyl-L-homocysteine, respectively. Is also able to deaminate adenosine. The protein is 5-methylthioadenosine/S-adenosylhomocysteine deaminase of Bacillus cereus (strain AH187).